Reading from the N-terminus, the 57-residue chain is MSPQTETKASVGFKAGVKDYKLTYYTPEYETKDTDILAAFRVTPQPGVPPEEAGAAV.

A propeptide spanning residues 1–2 (MS) is cleaved from the precursor. An N-acetylproline modification is found at P3. K14 is subject to N6,N6,N6-trimethyllysine.

The protein belongs to the RuBisCO large chain family. Type I subfamily. As to quaternary structure, heterohexadecamer of 8 large chains and 8 small chains.

The protein localises to the plastid. It localises to the chloroplast. It carries out the reaction 2 (2R)-3-phosphoglycerate + 2 H(+) = D-ribulose 1,5-bisphosphate + CO2 + H2O. The enzyme catalyses D-ribulose 1,5-bisphosphate + O2 = 2-phosphoglycolate + (2R)-3-phosphoglycerate + 2 H(+). Functionally, ruBisCO catalyzes two reactions: the carboxylation of D-ribulose 1,5-bisphosphate, the primary event in carbon dioxide fixation, as well as the oxidative fragmentation of the pentose substrate in the photorespiration process. Both reactions occur simultaneously and in competition at the same active site. The sequence is that of Ribulose bisphosphate carboxylase large chain (rbcL) from Buxus sempervirens (Common box).